The chain runs to 146 residues: MQGLSFTFSAVTLFLVLCLQLGIIESQDDENVRKPLLIEIDVPSTAQENQEITVQVTVETQYRECMVIKAYLVSNEPMEGAFNYVQTRCLCNDHPIRFFWDIIITRTVTFATVIDIVREKNICPNDMAVVPITANRYYTYNTVRMN.

The signal sequence occupies residues 1 to 26 (MQGLSFTFSAVTLFLVLCLQLGIIES). The residue at position 27 (Gln27) is a Pyrrolidone carboxylic acid. Intrachain disulfides connect Cys65-Cys91 and Cys89-Cys123.

It belongs to the PIP family. In terms of assembly, monomer. Interacts with AZGP1. Lacrimal and submaxillary glands.

Its subcellular location is the secreted. The sequence is that of Prolactin-inducible protein homolog (Pip) from Mus musculus (Mouse).